An 82-amino-acid polypeptide reads, in one-letter code: Large ribosomal subunit protein uL23 (82 aa).

This sequence belongs to the universal ribosomal protein uL23 family. Part of the 50S ribosomal subunit. Contacts protein L29.

In terms of biological role, binds to 23S rRNA. One of the proteins that surrounds the polypeptide exit tunnel on the outside of the ribosome. The chain is Large ribosomal subunit protein uL23 from Methanospirillum hungatei JF-1 (strain ATCC 27890 / DSM 864 / NBRC 100397 / JF-1).